Consider the following 396-residue polypeptide: Multidrug resistance protein MdtL (396 aa).

Over 1–4 (MFRY) the chain is Cytoplasmic. Residues 5–25 (LLCCFGLVLMYPTGIDMYLVG) traverse the membrane as a helical segment. The Periplasmic portion of the chain corresponds to 26 to 41 (LPQIANQLGATEAQLH). Residues 42-62 (IAFSVYLAGMATTMLFAGSLA) traverse the membrane as a helical segment. The Cytoplasmic portion of the chain corresponds to 63–64 (DR). A helical membrane pass occupies residues 65–85 (IGRKPITLFSALLFALASYFA). Topologically, residues 86–92 (ARSQSSD) are periplasmic. The helical transmembrane segment at 93–113 (LFLVARFVQGVGAGCCYVVAF) threads the bilayer. At 114-131 (AILRDALDDKRRAKVLSM) the chain is on the cytoplasmic side. A helical transmembrane segment spans residues 132 to 152 (VNGVTCIIPVIAPVIGHLIML). At 153–157 (RFPWP) the chain is on the periplasmic side. A helical transmembrane segment spans residues 158–178 (SLFYTMAVMGLLVFGLCLFVL). Topologically, residues 179–209 (RETYSKASFHSQTLPRVQTESFKQGFFISRV) are cytoplasmic. Residues 210 to 230 (VITTLGVTTILSYVNVSPMLI) traverse the membrane as a helical segment. Topologically, residues 231 to 242 (MGQMGFDRGQYS) are periplasmic. Residues 243-263 (NTMAMTALVSMLASFSTPFLL) form a helical membrane-spanning segment. Topologically, residues 264 to 277 (NQFKEKSLILFSQT) are cytoplasmic. Helical transmembrane passes span 278–298 (LFAAAALVFILTQLGWLGQLF) and 299–319 (NLLGFGLVCSGFAIGFGVTMS). At 320–333 (QALSPFVARAGVAS) the chain is on the cytoplasmic side. Residues 334–354 (SLLGIAQVCTSALYIWVMGLL) traverse the membrane as a helical segment. At 355 to 360 (EVSAIN) the chain is on the periplasmic side. A helical transmembrane segment spans residues 361 to 381 (ILLAILAVGALISITLMLAVP). The Cytoplasmic segment spans residues 382–396 (KLSEMVANEQIPESA).

Belongs to the major facilitator superfamily. DHA1 family. MdtL (TC 2.A.1.2.22) subfamily.

The protein localises to the cell inner membrane. This chain is Multidrug resistance protein MdtL, found in Shewanella sp. (strain ANA-3).